Here is a 363-residue protein sequence, read N- to C-terminus: Anhydro-N-acetylmuramic acid kinase (363 aa).

Position 10–17 (10–17 (GTSLDGLD)) interacts with ATP.

The protein belongs to the anhydro-N-acetylmuramic acid kinase family.

It catalyses the reaction 1,6-anhydro-N-acetyl-beta-muramate + ATP + H2O = N-acetyl-D-muramate 6-phosphate + ADP + H(+). It functions in the pathway amino-sugar metabolism; 1,6-anhydro-N-acetylmuramate degradation. The protein operates within cell wall biogenesis; peptidoglycan recycling. Functionally, catalyzes the specific phosphorylation of 1,6-anhydro-N-acetylmuramic acid (anhMurNAc) with the simultaneous cleavage of the 1,6-anhydro ring, generating MurNAc-6-P. Is required for the utilization of anhMurNAc either imported from the medium or derived from its own cell wall murein, and thus plays a role in cell wall recycling. This chain is Anhydro-N-acetylmuramic acid kinase, found in Pseudomonas fluorescens (strain Pf0-1).